We begin with the raw amino-acid sequence, 306 residues long: Ribonuclease Z (306 aa).

Residues His62, His64, Asp66, His67, His138, Asp209, and His267 each coordinate Zn(2+). Asp66 acts as the Proton acceptor in catalysis.

This sequence belongs to the RNase Z family. As to quaternary structure, homodimer. It depends on Zn(2+) as a cofactor.

It catalyses the reaction Endonucleolytic cleavage of RNA, removing extra 3' nucleotides from tRNA precursor, generating 3' termini of tRNAs. A 3'-hydroxy group is left at the tRNA terminus and a 5'-phosphoryl group is left at the trailer molecule.. Functionally, zinc phosphodiesterase, which displays some tRNA 3'-processing endonuclease activity. Probably involved in tRNA maturation, by removing a 3'-trailer from precursor tRNA. The chain is Ribonuclease Z from Archaeoglobus fulgidus (strain ATCC 49558 / DSM 4304 / JCM 9628 / NBRC 100126 / VC-16).